An 81-amino-acid polypeptide reads, in one-letter code: Photosystem I iron-sulfur center (81 aa).

4Fe-4S ferredoxin-type domains are found at residues 2 to 31 (SHSV…MVPW) and 37 to 68 (GQIA…IRVY). [4Fe-4S] cluster-binding residues include C11, C14, C17, C21, C48, C51, C54, and C58.

In terms of assembly, the cyanobacterial PSI reaction center is composed of one copy each of PsaA,B,C,D,E,F,I,J,K,L,M and X, and forms trimeric complexes. Requires [4Fe-4S] cluster as cofactor.

The protein localises to the cellular thylakoid membrane. It catalyses the reaction reduced [plastocyanin] + hnu + oxidized [2Fe-2S]-[ferredoxin] = oxidized [plastocyanin] + reduced [2Fe-2S]-[ferredoxin]. Apoprotein for the two 4Fe-4S centers FA and FB of photosystem I (PSI); essential for photochemical activity. FB is the terminal electron acceptor of PSI, donating electrons to ferredoxin. The C-terminus interacts with PsaA/B/D and helps assemble the protein into the PSI complex. Required for binding of PsaD and PsaE to PSI. PSI is a plastocyanin/cytochrome c6-ferredoxin oxidoreductase, converting photonic excitation into a charge separation, which transfers an electron from the donor P700 chlorophyll pair to the spectroscopically characterized acceptors A0, A1, FX, FA and FB in turn. This chain is Photosystem I iron-sulfur center, found in Synechococcus sp. (strain RCC307).